Consider the following 173-residue polypeptide: Photosystem I assembly protein Ycf3 (173 aa).

TPR repeat units follow at residues 35 to 68 (AYVY…EESP), 72 to 105 (SETL…NSNQ), and 120 to 153 (GRTA…YPGG).

Belongs to the Ycf3 family.

The protein resides in the cellular thylakoid membrane. Its function is as follows. Essential for the assembly of the photosystem I (PSI) complex. May act as a chaperone-like factor to guide the assembly of the PSI subunits. This Prochlorococcus marinus (strain MIT 9303) protein is Photosystem I assembly protein Ycf3.